Reading from the N-terminus, the 516-residue chain is MKRSISFRPTLLALVLATNFPVAHAAVPKDMLVIGKAADPQTLDPAVTIDNNDWTVTYPSYQRLVQYKTDGDKGSTDVEGDLASSWKASDDQKEWTFTLKDNAKFADGTPVTAEAVKLSFERLLKIGQGPAEAFPKDLKIDAPDEHTVKFTLSQPFAPFLYTLANDGASIINPAVLKEHAADDARGFLAQNTAGSGPFMLKSWQKGQQLVLVPNPHYPGNKPNFKRVSVKIIGESASRRLQLSRGDIDIADALPVDQLNALKQENKVNVAEYPSLRVTYLYLNNSKAPLNQADLRRAISWSTDYQGMVNGILSGNGKQMRGPIPEGMWGYDATAMQYNHDETKAKAEWDKVTSKPTSLTFLYSDNDPNWEPIALATQSSLNKLGIIVKLEKLANATMRDRVGKGDYDIAIGNWSPDFADPYMFMNYWFESDKKGLPGNRSFYENSEVDKLLRNALATTDQTQRTRDYQQAQKIVIDDAAYVYLFQKNYQLAMNKEVKGFVFNPMLEQVFNINTMSK.

The first 25 residues, 1–25 (MKRSISFRPTLLALVLATNFPVAHA), serve as a signal peptide directing secretion.

It belongs to the bacterial solute-binding protein 5 family. As to quaternary structure, the complex is composed of two ATP-binding proteins (DdpD and DdpF), two transmembrane proteins (DdpB and DdpC) and a solute-binding protein (DdpA).

The protein localises to the periplasm. Functionally, part of the ABC transporter complex DdpABCDF, which is probably involved in D,D-dipeptide transport. The protein is Probable D,D-dipeptide-binding periplasmic protein DdpA (ddpA) of Escherichia coli (strain K12).